We begin with the raw amino-acid sequence, 1026 residues long: Probable DNA-directed RNA polymerase II subunit RPB1 homolog (1026 aa).

Residues Cys-62, Cys-65, Cys-72, His-75, Cys-102, Cys-105, and Cys-142 each contribute to the Zn(2+) site. Mg(2+) contacts are provided by Asp-588, Asp-590, and Asp-592.

Belongs to the RNA polymerase beta' chain family.

It carries out the reaction RNA(n) + a ribonucleoside 5'-triphosphate = RNA(n+1) + diphosphate. Its function is as follows. Component of the DNA-dependent RNA polymerase that catalyzes the transcription of DNA into RNA using the four ribonucleoside triphosphates as substrates. Largest and catalytic component of RNA polymerase II which synthesizes mRNA precursors and many functional non-coding RNAs. Forms the polymerase active center together with the second largest subunit. This Acheta domesticus (House cricket) protein is Probable DNA-directed RNA polymerase II subunit RPB1 homolog.